A 471-amino-acid polypeptide reads, in one-letter code: ATP synthase subunit beta (471 aa).

Position 153–160 (153–160) interacts with ATP; that stretch reads GGAGVGKT.

It belongs to the ATPase alpha/beta chains family. As to quaternary structure, F-type ATPases have 2 components, CF(1) - the catalytic core - and CF(0) - the membrane proton channel. CF(1) has five subunits: alpha(3), beta(3), gamma(1), delta(1), epsilon(1). CF(0) has four main subunits: a(1), b(1), b'(1) and c(9-12).

It is found in the cell inner membrane. The catalysed reaction is ATP + H2O + 4 H(+)(in) = ADP + phosphate + 5 H(+)(out). Its function is as follows. Produces ATP from ADP in the presence of a proton gradient across the membrane. The catalytic sites are hosted primarily by the beta subunits. The chain is ATP synthase subunit beta from Methylibium petroleiphilum (strain ATCC BAA-1232 / LMG 22953 / PM1).